Consider the following 277-residue polypeptide: 4-hydroxy-tetrahydrodipicolinate reductase (277 aa).

Position 9–14 (9–14) interacts with NAD(+); it reads GATGRM. Lysine 37 serves as a coordination point for NADP(+). Position 75–77 (75–77) interacts with NAD(+); the sequence is GTS. Catalysis depends on histidine 132, which acts as the Proton donor/acceptor. The Proton donor role is filled by lysine 136. 142–143 is a binding site for (S)-2,3,4,5-tetrahydrodipicolinate; that stretch reads GT. 2 disordered regions span residues 154–173 and 247–277; these read ARGA…ARGQ and ERAA…VTSA. The segment covering 250–265 has biased composition (low complexity); it reads AQAAAGDAPSGPVDDG.

Belongs to the DapB family.

Its subcellular location is the cytoplasm. It carries out the reaction (S)-2,3,4,5-tetrahydrodipicolinate + NAD(+) + H2O = (2S,4S)-4-hydroxy-2,3,4,5-tetrahydrodipicolinate + NADH + H(+). The catalysed reaction is (S)-2,3,4,5-tetrahydrodipicolinate + NADP(+) + H2O = (2S,4S)-4-hydroxy-2,3,4,5-tetrahydrodipicolinate + NADPH + H(+). It functions in the pathway amino-acid biosynthesis; L-lysine biosynthesis via DAP pathway; (S)-tetrahydrodipicolinate from L-aspartate: step 4/4. Functionally, catalyzes the conversion of 4-hydroxy-tetrahydrodipicolinate (HTPA) to tetrahydrodipicolinate. The protein is 4-hydroxy-tetrahydrodipicolinate reductase of Clavibacter michiganensis subsp. michiganensis (strain NCPPB 382).